The primary structure comprises 270 residues: Homeobox protein vent1B (270 aa).

2 stretches are compositionally biased toward basic and acidic residues: residues 17 to 26 and 44 to 59; these read EEAADGKDSM and YAKEMPRRKDGQDVQE. 2 disordered regions span residues 17–66 and 88–134; these read EEAA…SFQC and TWGS…LRTA. The segment covering 89–99 has biased composition (polar residues); the sequence is WGSSDEFSSAG. A compositionally biased stretch (basic and acidic residues) spans 116–131; it reads QDTDHNGKSTKSDRRL. The homeobox DNA-binding region spans 128-187; that stretch reads DRRLRTAFSPQQISKLEQAFNKQRYLGASERKKLATSLMLSEIQVKTWFQNRRMKLKRQI.

In terms of tissue distribution, expressed in the ventral marginal zone of gastrulae. At the end of gastrulation, predominantly localized to the ventral region of the closing slit blastopore. At early tail bud stage, expression is maintained only in the forming proctodeum.

It is found in the nucleus. Its function is as follows. Probable transcription regulator. Acts in a ventral signaling pathway downstream of bmp4 and vent2B. The chain is Homeobox protein vent1B (vent1B) from Xenopus laevis (African clawed frog).